The following is a 357-amino-acid chain: tRNA-specific 2-thiouridylase MnmA (357 aa).

Residues 7-14 (GLSGGVDS) and Leu33 each bind ATP. Cys94 acts as the Nucleophile in catalysis. Cys94 and Cys193 are disulfide-bonded. Residue Gly119 coordinates ATP. The interaction with tRNA stretch occupies residues 143 to 145 (KDQ). Catalysis depends on Cys193, which acts as the Cysteine persulfide intermediate. The tract at residues 298 to 299 (RY) is interaction with tRNA.

The protein belongs to the MnmA/TRMU family.

It localises to the cytoplasm. It carries out the reaction S-sulfanyl-L-cysteinyl-[protein] + uridine(34) in tRNA + AH2 + ATP = 2-thiouridine(34) in tRNA + L-cysteinyl-[protein] + A + AMP + diphosphate + H(+). Its function is as follows. Catalyzes the 2-thiolation of uridine at the wobble position (U34) of tRNA, leading to the formation of s(2)U34. This Synechococcus sp. (strain ATCC 27144 / PCC 6301 / SAUG 1402/1) (Anacystis nidulans) protein is tRNA-specific 2-thiouridylase MnmA.